Consider the following 103-residue polypeptide: MAVQQKIRIKLKSYDHSLVDKWALRIIDVVKQTDAIIFGPIPLPTKSHVYTVNRSPHVDKKSREQFSFASHKRLIEIINPTSRTIDMLMKLELPSGVDVEIKS.

This sequence belongs to the universal ribosomal protein uS10 family. In terms of assembly, part of the 30S ribosomal subunit.

Functionally, involved in the binding of tRNA to the ribosomes. This chain is Small ribosomal subunit protein uS10, found in Chlorobium luteolum (strain DSM 273 / BCRC 81028 / 2530) (Pelodictyon luteolum).